The chain runs to 285 residues: 2-dehydro-3-deoxyphosphooctonate aldolase (285 aa).

It belongs to the KdsA family.

The protein localises to the cytoplasm. The enzyme catalyses D-arabinose 5-phosphate + phosphoenolpyruvate + H2O = 3-deoxy-alpha-D-manno-2-octulosonate-8-phosphate + phosphate. The protein operates within carbohydrate biosynthesis; 3-deoxy-D-manno-octulosonate biosynthesis; 3-deoxy-D-manno-octulosonate from D-ribulose 5-phosphate: step 2/3. Its pathway is bacterial outer membrane biogenesis; lipopolysaccharide biosynthesis. The sequence is that of 2-dehydro-3-deoxyphosphooctonate aldolase from Polaromonas sp. (strain JS666 / ATCC BAA-500).